Consider the following 160-residue polypeptide: Transcription antitermination protein NusB (160 aa).

This sequence belongs to the NusB family.

In terms of biological role, involved in transcription antitermination. Required for transcription of ribosomal RNA (rRNA) genes. Binds specifically to the boxA antiterminator sequence of the ribosomal RNA (rrn) operons. This Rhizobium meliloti (strain 1021) (Ensifer meliloti) protein is Transcription antitermination protein NusB.